We begin with the raw amino-acid sequence, 93 residues long: Large ribosomal subunit protein bL31B (93 aa).

It belongs to the bacterial ribosomal protein bL31 family. Type B subfamily. Part of the 50S ribosomal subunit.

This Psychrobacter cryohalolentis (strain ATCC BAA-1226 / DSM 17306 / VKM B-2378 / K5) protein is Large ribosomal subunit protein bL31B.